Consider the following 605-residue polypeptide: Elongation factor 4 (605 aa).

One can recognise a tr-type G domain in the interval 9-192 (GMIRNFCIIA…AIVQRIPAPA (184 aa)). GTP-binding positions include 21-26 (DHGKST) and 139-142 (NKID).

The protein belongs to the TRAFAC class translation factor GTPase superfamily. Classic translation factor GTPase family. LepA subfamily.

The protein localises to the cell inner membrane. The enzyme catalyses GTP + H2O = GDP + phosphate + H(+). Its function is as follows. Required for accurate and efficient protein synthesis under certain stress conditions. May act as a fidelity factor of the translation reaction, by catalyzing a one-codon backward translocation of tRNAs on improperly translocated ribosomes. Back-translocation proceeds from a post-translocation (POST) complex to a pre-translocation (PRE) complex, thus giving elongation factor G a second chance to translocate the tRNAs correctly. Binds to ribosomes in a GTP-dependent manner. This is Elongation factor 4 from Chlorobaculum parvum (strain DSM 263 / NCIMB 8327) (Chlorobium vibrioforme subsp. thiosulfatophilum).